Consider the following 122-residue polypeptide: Basic phospholipase A2 Cdr-13 (122 aa).

Intrachain disulfides connect Cys26–Cys115, Cys28–Cys44, Cys43–Cys95, Cys49–Cys122, Cys50–Cys88, Cys57–Cys81, and Cys75–Cys86. Ca(2+) contacts are provided by Tyr27, Gly29, and Gly31. Residue His47 is part of the active site. Asp48 is a Ca(2+) binding site. Asp89 is an active-site residue.

Ca(2+) is required as a cofactor. In terms of tissue distribution, expressed by the venom gland.

It localises to the secreted. The catalysed reaction is a 1,2-diacyl-sn-glycero-3-phosphocholine + H2O = a 1-acyl-sn-glycero-3-phosphocholine + a fatty acid + H(+). Snake venom phospholipase A2 (PLA2) that induces myonecrosis and edema upon subcutaneous injections in mice. In vitro, causes a potent blockade of neuromuscular transmission in young chicken biventer cervicis preparation and produces cytotoxicity in murine C2C12 skeletal muscle myotubes and lack cytolytic activity upon myoblasts in vitro. PLA2 catalyzes the calcium-dependent hydrolysis of the 2-acyl groups in 3-sn-phosphoglycerides. This is Basic phospholipase A2 Cdr-13 from Crotalus durissus ruruima (South American rattlesnake).